We begin with the raw amino-acid sequence, 897 residues long: MTADGRGRIDAAFRGRLGRFVLDASLSVPATGVTAIFGPSGCGKTTIARCIAGLQRLSDGFCAIDGEIWQDGMAFRPAHRRPVGYVFQEPSLFPHLSVRGNLLYGAPKAAATSIGFDEVVELLGLTALLGRSPHRLSGGERQRVAIGRALLSQPRLLLMDEPLAALDRTTKNEILPFLERLHERLSLPVLYISHDMAEIERFADYLVLMERGRVVGAGPLHILQSDPALPLAYSRDAAVSIDGLVEAYDERYGLLTLAVNGGLLHVPSHRIAVGARQRLRIAASDVSIVRARPSESSILNILPARIVTQSPPGAGEVTIVLGLDSDGSGAPILSRISSRSRDLLGLSDGMAVFAQVKGVSLVRASGCAIGNMGPTAPGQLDHCSTQDTGVRSEAGTTAMPIDFAEIDPNRVAAILYRPQDDLDTLLADFAQDLVRAGERIGGIVQRNIKDGSGCQVGMQAIDLMTGREISICQPLGSGAMACKLDAAGLADASVAVASAIAQDVDLIVINKFSKQEAAGRGLRDELAGAIAAGIPVLTAVPEKCFEAWISFTGGIGTTLLCERQVIEAWWRDTSSRMKRMREDHDAVVAQCIEISGALPLVQRVVARQLVVTHDLPLDPERAEAEVVVRGVVERTNVEVLDGAADEADEAPDAGFPVGPERIERLPDIGPVPRRHEALQVEREVLSPDACLQRSAGERVDVFKEGKTKVGTVLVDRGDAELVEGPIVLELHEGAPVLVEMNVGVDLQTLYEIAVRGRVAGAERRCAIGLEAFAQRRPQRDVAFRIGGPKRDVFEPVKRFGTQPGIGKDRPVLCPAVRLDRRPLGDRSVLGPREPDAGAKGRKRQNDPEVAHIAPCQHRRTSPHLASARDALFGPREWISATYPPGNMTNAADRLLDV.

Residues 6 to 236 (RGRIDAAFRG…PALPLAYSRD (231 aa)) enclose the ABC transporter domain. Residue 38-45 (GPSGCGKT) coordinates ATP. A Mop domain is found at 295-365 (ESSILNILPA…VKGVSLVRAS (71 aa)). The segment at 823 to 848 (LGDRSVLGPREPDAGAKGRKRQNDPE) is disordered. The span at 832–848 (REPDAGAKGRKRQNDPE) shows a compositional bias: basic and acidic residues.

Belongs to the ABC transporter superfamily. Molybdate importer (TC 3.A.1.8) family. In terms of assembly, the complex is composed of two ATP-binding proteins (ModC), two transmembrane proteins (ModB) and a solute-binding protein (ModA).

It localises to the cell inner membrane. The catalysed reaction is molybdate(out) + ATP + H2O = molybdate(in) + ADP + phosphate + H(+). In terms of biological role, part of the ABC transporter complex ModABC involved in molybdenum import. Responsible for energy coupling to the transport system. In Bradyrhizobium diazoefficiens (strain JCM 10833 / BCRC 13528 / IAM 13628 / NBRC 14792 / USDA 110), this protein is Molybdenum import ATP-binding protein ModC 2.